A 106-amino-acid polypeptide reads, in one-letter code: HIG1 domain family member 2A (106 aa).

Residue Ala2 is modified to N-acetylalanine. The region spanning 20–106 (VIEGFSPTVY…LAASAMKSQA (87 aa)) is the HIG1 domain. 2 consecutive transmembrane segments (helical) span residues 47 to 67 (PMVP…LYCF) and 83 to 103 (IAAQ…SAMK).

As to quaternary structure, associates with cytochrome c oxidase (COX, complex IV); proposed complex component.

It localises to the mitochondrion membrane. The protein localises to the mitochondrion inner membrane. Its function is as follows. Proposed subunit of cytochrome c oxidase (COX, complex IV), which is the terminal component of the mitochondrial respiratory chain that catalyzes the reduction of oxygen to water. May be involved in cytochrome c oxidase activity. May play a role in the assembly of respiratory supercomplexes. This is HIG1 domain family member 2A (Higd2a) from Mus musculus (Mouse).